The chain runs to 375 residues: Succinyl-diaminopimelate desuccinylase (375 aa).

Histidine 66 serves as a coordination point for Zn(2+). Aspartate 68 is a catalytic residue. Aspartate 99 serves as a coordination point for Zn(2+). The active-site Proton acceptor is glutamate 133. Residues glutamate 134, glutamate 162, and histidine 348 each coordinate Zn(2+).

This sequence belongs to the peptidase M20A family. DapE subfamily. As to quaternary structure, homodimer. The cofactor is Zn(2+). Co(2+) is required as a cofactor.

The catalysed reaction is N-succinyl-(2S,6S)-2,6-diaminopimelate + H2O = (2S,6S)-2,6-diaminopimelate + succinate. The protein operates within amino-acid biosynthesis; L-lysine biosynthesis via DAP pathway; LL-2,6-diaminopimelate from (S)-tetrahydrodipicolinate (succinylase route): step 3/3. Catalyzes the hydrolysis of N-succinyl-L,L-diaminopimelic acid (SDAP), forming succinate and LL-2,6-diaminopimelate (DAP), an intermediate involved in the bacterial biosynthesis of lysine and meso-diaminopimelic acid, an essential component of bacterial cell walls. The chain is Succinyl-diaminopimelate desuccinylase from Aeromonas hydrophila subsp. hydrophila (strain ATCC 7966 / DSM 30187 / BCRC 13018 / CCUG 14551 / JCM 1027 / KCTC 2358 / NCIMB 9240 / NCTC 8049).